We begin with the raw amino-acid sequence, 486 residues long: Probable cytosol aminopeptidase (486 aa).

Residues K256 and D261 each coordinate Mn(2+). K268 is an active-site residue. Residues D280, D339, and E341 each contribute to the Mn(2+) site. R343 is a catalytic residue.

The protein belongs to the peptidase M17 family. Mn(2+) is required as a cofactor.

The protein localises to the cytoplasm. It catalyses the reaction Release of an N-terminal amino acid, Xaa-|-Yaa-, in which Xaa is preferably Leu, but may be other amino acids including Pro although not Arg or Lys, and Yaa may be Pro. Amino acid amides and methyl esters are also readily hydrolyzed, but rates on arylamides are exceedingly low.. It carries out the reaction Release of an N-terminal amino acid, preferentially leucine, but not glutamic or aspartic acids.. In terms of biological role, presumably involved in the processing and regular turnover of intracellular proteins. Catalyzes the removal of unsubstituted N-terminal amino acids from various peptides. The chain is Probable cytosol aminopeptidase from Synechococcus sp. (strain ATCC 27144 / PCC 6301 / SAUG 1402/1) (Anacystis nidulans).